A 439-amino-acid polypeptide reads, in one-letter code: MRLSLDSFRAGLHPGSTYRVAFSGGLDSAVLLDLMCQVRRVSGIGVRAIHVHHGIQPEADAWSRHCAAVADRYGVALDILQIDGRSRPGDSPEAAARTARYHSLEASLDPGDILVTAQHLDDQAETLLLQLLRGAGLAGLAAMPNAVPFGAGILHRPLLRFGRRDILAYAQERGLSWIEDPSNRDERYDRNFIRRRILPQLAGRWPAVAANLTRSAGHCAEAAGLLDRLADTLMAAATAADEPGTLVLEIVQRLQPDEQRLLLRRWIHKRGLRAPPAKLLERIRKEVVETAGDRTPMIAWAEGTVRRYRHRLHLLPPSADFDASWTAAWSGETPLTLAGNGCLHAALCPGPGIDPDKWRSGRITVRYRRAGDRLEPAGRRGHHELKKLFQEAGLPPWLRDRQPIVCIDGRIASVGGSQWLASEFAGAPERVNIVVHWTP.

23 to 28 (SGGLDS) is an ATP binding site.

This sequence belongs to the tRNA(Ile)-lysidine synthase family.

The protein localises to the cytoplasm. It catalyses the reaction cytidine(34) in tRNA(Ile2) + L-lysine + ATP = lysidine(34) in tRNA(Ile2) + AMP + diphosphate + H(+). Functionally, ligates lysine onto the cytidine present at position 34 of the AUA codon-specific tRNA(Ile) that contains the anticodon CAU, in an ATP-dependent manner. Cytidine is converted to lysidine, thus changing the amino acid specificity of the tRNA from methionine to isoleucine. This is tRNA(Ile)-lysidine synthase from Methylococcus capsulatus (strain ATCC 33009 / NCIMB 11132 / Bath).